A 1676-amino-acid chain; its full sequence is Protein TIC 214 (1676 aa).

The next 6 membrane-spanning stretches (helical) occupy residues 23 to 43 (AGPL…PIAP), 71 to 91 (GILI…FLSI), 96 to 116 (LYMI…YMFF), 145 to 165 (AFLD…SPVM), 179 to 199 (VSLF…MFVL), and 226 to 246 (IFPP…PVSF).

This sequence belongs to the TIC214 family. As to quaternary structure, part of the Tic complex.

The protein localises to the plastid. The protein resides in the chloroplast inner membrane. Its function is as follows. Involved in protein precursor import into chloroplasts. May be part of an intermediate translocation complex acting as a protein-conducting channel at the inner envelope. The chain is Protein TIC 214 from Zygnema circumcarinatum (Green alga).